The primary structure comprises 227 residues: Trypsin (227 aa).

The region spanning 1-223 (IVGGEDANVQ…YYDVLMEQIN (223 aa)) is the Peptidase S1 domain. A disulfide bond links Cys-27 and Cys-43. Catalysis depends on charge relay system residues His-42 and Asp-88. Disulfide bonds link Cys-150/Cys-164 and Cys-175/Cys-199. Ser-179 serves as the catalytic Charge relay system.

This sequence belongs to the peptidase S1 family.

The enzyme catalyses Preferential cleavage: Arg-|-Xaa, Lys-|-Xaa.. This chain is Trypsin, found in Saccharopolyspora erythraea (Streptomyces erythraeus).